Consider the following 238-residue polypeptide: 3-deoxy-D-manno-octulosonic acid kinase (238 aa).

The active site involves D167.

Belongs to the protein kinase superfamily. KdkA/RfaP family.

It is found in the cell inner membrane. It catalyses the reaction an alpha-Kdo-(2-&gt;6)-lipid IVA + ATP = a 4-O-phospho-alpha-Kdo-(2-&gt;6)-lipid IVA + ADP + H(+). Its pathway is bacterial outer membrane biogenesis; LPS core biosynthesis. Its function is as follows. Catalyzes the ATP-dependent phosphorylation of the 3-deoxy-D-manno-octulosonic acid (Kdo) residue in Kdo-lipid IV(A) at the 4-OH position. This Vibrio parahaemolyticus serotype O3:K6 (strain RIMD 2210633) protein is 3-deoxy-D-manno-octulosonic acid kinase.